Here is a 1350-residue protein sequence, read N- to C-terminus: MPSFYLFAASSEGRVYTLSTNSGAWRELPYLGLEFKKICAVPNFLWAIGGDRQVYVHVHGLDVPIRIREESYENERWLPIEGFSKTLLPTDRYRYSSADGSVERGVDKIRLPSMAWQWDGDWHLDLELDGQPLTEDGWMYALDFPATYSAKKSWNSYVRRRKWVRYRRYAALNSWCAVAPLHKDPTQEPFIDVAIGGTCVPNAPAGTLCVWAITAHGRAMFRTGVSKTAPEGLRWTAVPTPTGSELAQISVGPTGLVWAVLHNGRVIVRTGVTRDNLVGDSWLDVKTPVAASSLRIVHVSVGTDAVWCVTNDHHAWFRRGVKGEAAGISEDSAIGKGWVEMVGNISMVSVAANDQVFAIGAADRCLYHRSGVTSADPTGKKWRLIQCPMQISRTSSSLSIVSRKSGGSSSTPGSKHQSFSNLYSKEKEKGVVETCAVIETVLNSSTGSCSSNGGPPGLLKNERWKLSADSPPTIGSLNLNDRHKQRTAALRETSHASSAPAADVVEVVTGKFETQLRNPRAWSPVRSVGSVVGTEAHPESDSTVFESDSTHHGSDVFLGEDDDHTGSQFWTECGILWSCVASGAVTVDASNMPNWFNEQTSDSKVDVNANWRKDIVNKLQRRQEKLAKLQTVAKFEKAVELSSWVKSADARYQRPGGEFEDCIIELEWVSSGSGTDTNSSENSRSGDSGTFTVLSPDGAATKIQFPLSDITCVQCCSEAGAPRIAIHAPHLPVNCSPVKLQFSSDSEMEDWLSHLSSVCSQINTMVGKPAGNAIWITSELGDVFVFDPANMKAHQTSEPSEGYVEKMDVSTCETPYYNTLYNGMPCGTELEISGCVYDDADQIRFDLQSHSAVKVQPHRVEKHRVIALHLNPRFNERTTVLNSMKESEWLDEIRNDKMAFAPGATFSLKIRALQDHYLIIVNNAVYTDYKYRIDPESVTRLYVSGRIKLFNVLYRCPSLIVSMERMHWRQMGGHIKRIFNSGVDVVWGISCDNTGWVYNGGWGGMFLKGLEGSGKINPMIDTHTYYVYENQRWNPISGFTAKSLPTDRHMWSDATGRQKRSKEHTKLLSTHCEWISDWAIDYNIPGGADKEGWQYAIDFPANYHAHKKLTDCVRRRRWMKRCRLSSSGPWQELSQSKILDAALQVLDEDVDHSCSGERNTAVAAWAIASNGDVLIRHGVCSLNPRGDAWEHITSDQPLVGISVGPTGQVWTVARNGMVFFRYGISRQNPCGDAWQQVEAPAGVTFKAISVGRAGIWALDNQQRLAVRKEISRTFPEGSHWQFLPNAANVPPHTDQHCGFRSVSVGSEVWAISLNGIICRRCGITEENPAGVGWNLGIAGQWQNVSVEGYM.

4 TECPR repeats span residues 23 to 59 (GAWR…VHVH), 233 to 271 (LRWT…VRTG), 280 to 320 (DSWL…FRRG), and 336 to 371 (KGWV…HRSG). Positions 396–415 (SSLSIVSRKSGGSSSTPGSK) are enriched in low complexity. 2 disordered regions span residues 396 to 420 (SSLS…QSFS) and 671 to 691 (SGSG…SGTF). The region spanning 816–955 (YYNTLYNGMP…RIKLFNVLYR (140 aa)) is the Galectin domain. TECPR repeat units follow at residues 966–1000 (MHWR…VYNG), 1187–1223 (DAWE…FRYG), 1232–1269 (DAWQ…VRKE), and 1278–1322 (SHWQ…RRCG).

Belongs to the TECPR1 family.

Its function is as follows. Involved in peroxisome biogenesis. This Drosophila melanogaster (Fruit fly) protein is Tectonin beta-propeller repeat-containing protein (Pex23).